Consider the following 336-residue polypeptide: Glycerol-3-phosphate dehydrogenase [NAD(P)+] (336 aa).

NADPH is bound by residues Trp16 and Lys109. Residues Lys109, Gly137, and Ser139 each coordinate sn-glycerol 3-phosphate. Ala141 serves as a coordination point for NADPH. 5 residues coordinate sn-glycerol 3-phosphate: Lys192, Asp245, Ser255, Arg256, and Asn257. Residue Lys192 is the Proton acceptor of the active site. Arg256 contacts NADPH. Positions 280 and 282 each coordinate NADPH.

This sequence belongs to the NAD-dependent glycerol-3-phosphate dehydrogenase family.

The protein resides in the cytoplasm. It carries out the reaction sn-glycerol 3-phosphate + NAD(+) = dihydroxyacetone phosphate + NADH + H(+). The enzyme catalyses sn-glycerol 3-phosphate + NADP(+) = dihydroxyacetone phosphate + NADPH + H(+). Its pathway is membrane lipid metabolism; glycerophospholipid metabolism. Functionally, catalyzes the reduction of the glycolytic intermediate dihydroxyacetone phosphate (DHAP) to sn-glycerol 3-phosphate (G3P), the key precursor for phospholipid synthesis. In Hyphomonas neptunium (strain ATCC 15444), this protein is Glycerol-3-phosphate dehydrogenase [NAD(P)+].